The primary structure comprises 137 residues: Large-conductance mechanosensitive channel (137 aa).

Transmembrane regions (helical) follow at residues 9–29 (AFAV…GAAF) and 79–99 (IQTI…VKVI).

The protein belongs to the MscL family. In terms of assembly, homopentamer.

It is found in the cell inner membrane. In terms of biological role, channel that opens in response to stretch forces in the membrane lipid bilayer. May participate in the regulation of osmotic pressure changes within the cell. This is Large-conductance mechanosensitive channel from Pseudomonas entomophila (strain L48).